Consider the following 364-residue polypeptide: Coproporphyrin III ferrochelatase (364 aa).

The Fe-coproporphyrin III site is built by Arg-29 and Tyr-118. Residues His-169 and Glu-250 each contribute to the Fe(2+) site.

This sequence belongs to the ferrochelatase family.

The protein localises to the cytoplasm. The catalysed reaction is Fe-coproporphyrin III + 2 H(+) = coproporphyrin III + Fe(2+). The protein operates within porphyrin-containing compound metabolism; protoheme biosynthesis. Its function is as follows. Involved in coproporphyrin-dependent heme b biosynthesis. Catalyzes the insertion of ferrous iron into coproporphyrin III to form Fe-coproporphyrin III. This Streptococcus pneumoniae serotype 2 (strain D39 / NCTC 7466) protein is Coproporphyrin III ferrochelatase.